We begin with the raw amino-acid sequence, 620 residues long: Threonine--tRNA ligase (620 aa).

One can recognise a TGS domain in the interval 1–42; that stretch reads MFEIAKGISNSLAKKSVGAKVDGKNVDMSYILDHDAEVEFID. The segment at 224-515 is catalytic; that stretch reads DHRKLGKELE…LIEHYAGAFP (292 aa). Zn(2+)-binding residues include C315, H366, and H492.

Belongs to the class-II aminoacyl-tRNA synthetase family. In terms of assembly, homodimer. It depends on Zn(2+) as a cofactor.

The protein resides in the cytoplasm. The enzyme catalyses tRNA(Thr) + L-threonine + ATP = L-threonyl-tRNA(Thr) + AMP + diphosphate + H(+). Functionally, catalyzes the attachment of threonine to tRNA(Thr) in a two-step reaction: L-threonine is first activated by ATP to form Thr-AMP and then transferred to the acceptor end of tRNA(Thr). Also edits incorrectly charged L-seryl-tRNA(Thr). In Fusobacterium nucleatum subsp. nucleatum (strain ATCC 25586 / DSM 15643 / BCRC 10681 / CIP 101130 / JCM 8532 / KCTC 2640 / LMG 13131 / VPI 4355), this protein is Threonine--tRNA ligase.